Reading from the N-terminus, the 127-residue chain is Protein yippee-like 4 (127 aa).

The Yippee domain maps to 27–124 (RTYSCVHCRA…IEMSHMVKDN (98 aa)). Cys-31, Cys-34, Cys-87, and Cys-90 together coordinate Zn(2+). Residues Thr-92 and Thr-93 each carry the phosphothreonine modification. Position 98 is a phosphotyrosine (Tyr-98).

The protein belongs to the yippee family.

The protein localises to the nucleus. It is found in the nucleolus. The sequence is that of Protein yippee-like 4 (YPEL4) from Chlorocebus aethiops (Green monkey).